The chain runs to 509 residues: Dihydrolipoyl dehydrogenase, mitochondrial (509 aa).

Residues 1 to 35 constitute a mitochondrion transit peptide; the sequence is MQSWSRVYCSLAKRGHFSRISHGLQAVSAVPLRTY. Position 66 is an N6-acetyllysine; alternate (lysine 66). An N6-succinyllysine; alternate modification is found at lysine 66. FAD-binding positions include 71-80 and lysine 89; that span reads EKNETLGGTC. The cysteines at positions 80 and 85 are disulfide-linked. An N6-acetyllysine; alternate mark is found at lysine 104, lysine 122, lysine 132, and lysine 143. N6-succinyllysine; alternate is present on residues lysine 104, lysine 122, lysine 132, and lysine 143. Glycine 154 contacts FAD. 2 positions are modified to N6-succinyllysine: lysine 159 and lysine 166. 183–185 lines the FAD pocket; the sequence is TGS. Residues 220-227 and glutamate 243 contribute to the NAD(+) site; that span reads GAGVIGVE. N6-succinyllysine is present on residues lysine 273 and lysine 277. Valine 278 contributes to the NAD(+) binding site. Serine 285 and serine 297 each carry phosphoserine. Glycine 314 contacts NAD(+). An N6-acetyllysine modification is found at lysine 346. FAD-binding positions include aspartate 355 and 361 to 364; that span reads MLAH. Lysine 410 carries the post-translational modification N6-acetyllysine; alternate. Position 410 is an N6-succinyllysine; alternate (lysine 410). Lysine 417 and lysine 420 each carry N6-acetyllysine. Position 430 is an N6-succinyllysine (lysine 430). Histidine 487 serves as the catalytic Proton acceptor. At serine 502 the chain carries Phosphoserine. Lysine 505 carries the post-translational modification N6-acetyllysine; alternate. N6-succinyllysine; alternate is present on lysine 505.

The protein belongs to the class-I pyridine nucleotide-disulfide oxidoreductase family. In terms of assembly, homodimer. Part of the multimeric pyruvate dehydrogenase complex that contains multiple copies of pyruvate dehydrogenase (subunits PDHA (PDHA1 or PDHA2) and PDHB, E1), dihydrolipoamide acetyltransferase (DLAT, E2) and lipoamide dehydrogenase (DLD, E3). These subunits are bound to an inner core composed of about 48 DLAT and 12 PDHX molecules (by non covalent bonds). The 2-oxoglutarate dehydrogenase complex is composed of OGDH (2-oxoglutarate dehydrogenase; E1), DLST (dihydrolipoamide succinyltransferase; E2), DLD (dihydrolipoamide dehydrogenase; E3) and the assembly factor KGD4. It contains multiple copies of the three enzymatic components (E1, E2 and E3). In the nucleus, the 2-oxoglutarate dehydrogenase complex associates with KAT2A. Interacts with PDHX. Requires FAD as cofactor. Post-translationally, tyrosine phosphorylated.

Its subcellular location is the mitochondrion matrix. It is found in the nucleus. The protein localises to the cell projection. It localises to the cilium. The protein resides in the flagellum. Its subcellular location is the cytoplasmic vesicle. It is found in the secretory vesicle. The protein localises to the acrosome. The enzyme catalyses N(6)-[(R)-dihydrolipoyl]-L-lysyl-[protein] + NAD(+) = N(6)-[(R)-lipoyl]-L-lysyl-[protein] + NADH + H(+). In terms of biological role, lipoamide dehydrogenase is a component of the glycine cleavage system as well as an E3 component of three alpha-ketoacid dehydrogenase complexes (pyruvate-, alpha-ketoglutarate-, and branched-chain amino acid-dehydrogenase complex). The 2-oxoglutarate dehydrogenase complex is mainly active in the mitochondrion. A fraction of the 2-oxoglutarate dehydrogenase complex also localizes in the nucleus and is required for lysine succinylation of histones: associates with KAT2A on chromatin and provides succinyl-CoA to histone succinyltransferase KAT2A. In monomeric form may have additional moonlighting function as serine protease. Involved in the hyperactivation of spermatazoa during capacitation and in the spermatazoal acrosome reaction. This Canis lupus familiaris (Dog) protein is Dihydrolipoyl dehydrogenase, mitochondrial (DLD).